The sequence spans 134 residues: Transmembrane protein 100 (134 aa).

Helical transmembrane passes span 56–76 (CIIP…AVAY) and 84–104 (IISI…ASSA). Ser-121 carries the phosphoserine modification.

Interacts (via C-terminus) with TRPA1 and TRPV1. Interacts with TASOR. As to expression, expressed in neurons of the myenteric and submucosal plexuses in the gastric body, jejunum and proximal colon. Expressed in arterial endothelial cells and neurons of the central nervous system and peripheral nervous system. Expressed in umbilical artery endothelial cells (at protein level).

It localises to the cell membrane. The protein resides in the membrane. The protein localises to the perikaryon. Its subcellular location is the cytoplasm. It is found in the perinuclear region. It localises to the endoplasmic reticulum. Its function is as follows. Plays a role during embryonic arterial endothelium differentiation and vascular morphogenesis through the ACVRL1 receptor-dependent signaling pathway upon stimulation by bone morphogenetic proteins, such as GDF2/BMP9 and BMP10. Involved in the regulation of nociception, acting as a modulator of the interaction between TRPA1 and TRPV1, two molecular sensors and mediators of pain signals in dorsal root ganglia (DRG) neurons. Mechanistically, it weakens their interaction, thereby releasing the inhibition of TRPA1 by TRPV1 and increasing the single-channel open probability of the TRPA1-TRPV1 complex. In Homo sapiens (Human), this protein is Transmembrane protein 100 (TMEM100).